We begin with the raw amino-acid sequence, 347 residues long: Heat-inducible transcription repressor HrcA (347 aa).

Belongs to the HrcA family.

Negative regulator of class I heat shock genes (grpE-dnaK-dnaJ and groELS operons). Prevents heat-shock induction of these operons. This Enterococcus faecalis (strain ATCC 700802 / V583) protein is Heat-inducible transcription repressor HrcA.